The chain runs to 414 residues: Arrestin domain-containing protein 3 (414 aa).

2 short sequence motifs (PPxY motif) span residues 346–349 (PPSY) and 391–394 (PPLY). The disordered stretch occupies residues 393–414 (LYSEIDPNPDQSADDRPSCPSR). Residues 405–414 (ADDRPSCPSR) are compositionally biased toward basic and acidic residues.

The protein belongs to the arrestin family. Interacts (via PPxY motifs) with NEDD4 (via WW domains). Interacts with ADRB2. Interacts with ADRB3. Interacts with HGS (via PPxY motifs). Does not bind TXN (thioredoxin). Interacts with ITCH. Interacts with WWP1 (via WW domains). Highly expressed in skeletal muscle, placenta, kidney, lung, liver, blood, adrenal gland, lymph node, mammary gland, thyroid, and trachea. Very low levels in colon, thymus, spleen, small intestine, bladder and bone marrow. Strong expression in differentiated adipocytes compared to preadipocytes. Detected in omental fat and subcutaneous fat tissue.

The protein resides in the cytoplasm. It is found in the cell membrane. Its subcellular location is the lysosome. It localises to the endosome. The protein localises to the early endosome. Its function is as follows. Adapter protein that plays a role in regulating cell-surface expression of adrenergic receptors and probably also other G protein-coupled receptors. Plays a role in NEDD4-mediated ubiquitination and endocytosis af activated ADRB2 and subsequent ADRB2 degradation. May recruit NEDD4 to ADRB2. Alternatively, may function as adapter protein that does not play a major role in recruiting NEDD4 to ADRB2, but rather plays a role in a targeting ADRB2 to endosomes. This is Arrestin domain-containing protein 3 (ARRDC3) from Homo sapiens (Human).